Reading from the N-terminus, the 371-residue chain is 4-hydroxyphenylpyruvate dioxygenase-like protein (371 aa).

VOC domains follow at residues 7–135 (RLCH…LLQR) and 160–328 (HVDH…VFTK). Positions 163, 258, and 339 each coordinate Fe cation.

This sequence belongs to the 4HPPD family. Fe cation serves as cofactor.

It localises to the mitochondrion. It carries out the reaction 3-(4-hydroxyphenyl)pyruvate + O2 = (S)-4-hydroxymandelate + CO2. Iron-dependent dioxygenase that catalyzes the conversion of 4-hydroxyphenylpyruvate (4-HPPA) to 4-hydroxymandelate (4-HMA) in the mitochondria, one of the steps in the biosynthesis of coenzyme Q10 from tyrosine. The chain is 4-hydroxyphenylpyruvate dioxygenase-like protein from Mus musculus (Mouse).